Consider the following 453-residue polypeptide: Ubiquitin-associated protein 1 (453 aa).

Residues 19–65 (LDDVPFKLNEKFRCPSKVGLPIGFCLSDCNAILSDLQYDFNLERRTV) form the UMA domain. The span at 83–93 (EAIRTDSESER) shows a compositional bias: basic and acidic residues. Disordered stretches follow at residues 83–119 (EAIRTDSESERQAASQDAEVGLVGGKKARPSDEQDIV), 189–223 (LQSQPQSSVSPPQLPPAEHRPVSPSTTPPLQAKTG), and 260–335 (FPKL…AGTT). Residues 189 to 199 (LQSQPQSSVSP) show a composition bias toward low complexity. Residues 285–328 (NLSNGTPPSLQRTASNNNTTLPQEQPVFAQNGTPKQSNPVTVTS) are compositionally biased toward polar residues. UBA domains lie at 340–381 (SPSE…LFTH) and 403–449 (GSEE…LMTR).

In terms of assembly, component of an ESCRT-I complex (endosomal sorting complex required for transport I).

It localises to the cytoplasm. The protein resides in the cytosol. The protein localises to the endosome. Functionally, component of the ESCRT-I complex, a regulator of vesicular trafficking process. Binds to ubiquitinated cargo proteins and is required for the sorting of endocytic ubiquitinated cargos into multivesicular bodies (MVBs). The chain is Ubiquitin-associated protein 1 from Danio rerio (Zebrafish).